A 231-amino-acid chain; its full sequence is MITRDFLMNADCKTAFGAIEESLLWSAEQRAASLAATLACRPDEGPVWIFGYGSLMWNPALEFTESCTGTLVGWHRAFCLRLTAGRGTAHQPGRMLALKEGGRTTGVAYRLPEETLEQELTLLWKREMITGCYLPTWCQLDLDDGRTVNAIVFIMDPRHPEYESDTRAQVIAPLIAAASGPLGTNAQYLFSLEQELIKLGMQDDGLNDLLVSVKKLLAENFPDGVLRPGFA.

49-54 lines the substrate pocket; sequence IFGYGS. Glutamate 127 functions as the Proton acceptor in the catalytic mechanism.

It belongs to the gamma-glutamylcyclotransferase family. ChaC subfamily.

The catalysed reaction is glutathione = L-cysteinylglycine + 5-oxo-L-proline. In terms of biological role, catalyzes the cleavage of glutathione into 5-oxo-L-proline and a Cys-Gly dipeptide. Acts specifically on glutathione, but not on other gamma-glutamyl peptides. The polypeptide is Glutathione-specific gamma-glutamylcyclotransferase (Escherichia coli (strain K12)).